The following is a 718-amino-acid chain: Catalase-peroxidase (718 aa).

The tryptophyl-tyrosyl-methioninium (Trp-Tyr) (with M-245) cross-link spans 98–219 (WHAAGTYRMG…LAATEMGLIY (122 aa)). Residue His-99 is the Proton acceptor of the active site. A cross-link (tryptophyl-tyrosyl-methioninium (Tyr-Met) (with W-98)) is located at residues 219–245 (YVNPEGPQASGDPRSAAPFIRATFGNM). Residue His-260 coordinates heme b.

The protein belongs to the peroxidase family. Peroxidase/catalase subfamily. Homodimer or homotetramer. Requires heme b as cofactor. Formation of the three residue Trp-Tyr-Met cross-link is important for the catalase, but not the peroxidase activity of the enzyme.

It catalyses the reaction H2O2 + AH2 = A + 2 H2O. It carries out the reaction 2 H2O2 = O2 + 2 H2O. Its function is as follows. Bifunctional enzyme with both catalase and broad-spectrum peroxidase activity. The chain is Catalase-peroxidase from Acinetobacter baumannii (strain ATCC 17978 / DSM 105126 / CIP 53.77 / LMG 1025 / NCDC KC755 / 5377).